Consider the following 379-residue polypeptide: Sialidase-2 (379 aa).

An FRIP motif motif is present at residues 20-23; the sequence is YRIP. Substrate contacts are provided by R21 and R41. The active-site Proton acceptor is D46. The BNR 1 repeat unit spans residues 127–138; sequence VSSTDHGRTWSP. Y179 and Y181 together coordinate substrate. One copy of the BNR 2 repeat lies at 197 to 208; that stretch reads FISLDHGHTWKL. 3 residues coordinate substrate: E218, R237, and R303. R303 is a catalytic residue. Y333 functions as the Nucleophile in the catalytic mechanism. E354 is a catalytic residue.

The protein belongs to the glycosyl hydrolase 33 family. As to expression, highly expressed in heart.

It localises to the cytoplasm. It is found in the cytosol. The enzyme catalyses Hydrolysis of alpha-(2-&gt;3)-, alpha-(2-&gt;6)-, alpha-(2-&gt;8)- glycosidic linkages of terminal sialic acid residues in oligosaccharides, glycoproteins, glycolipids, colominic acid and synthetic substrates.. It carries out the reaction a ganglioside GD1a + H2O = a ganglioside GM1 + N-acetylneuraminate. It catalyses the reaction a ganglioside GM1 + H2O = a ganglioside GA1 + N-acetylneuraminate. The catalysed reaction is a ganglioside GT1b + H2O = a ganglioside GD1b + N-acetylneuraminate. The enzyme catalyses a ganglioside GD1b + H2O = a ganglioside GM1 + N-acetylneuraminate. It carries out the reaction a ganglioside GD3 + H2O = a ganglioside GM3 + N-acetylneuraminate. It catalyses the reaction a ganglioside GM3 + H2O = a beta-D-galactosyl-(1-&gt;4)-beta-D-glucosyl-(1&lt;-&gt;1)-ceramide + N-acetylneuraminate. The catalysed reaction is a ganglioside GM2 + H2O = a ganglioside GA2 + N-acetylneuraminate. The enzyme catalyses a neolactoside IV(3)-alpha-NeuAc-nLc4Cer(d18:1(4E)) + H2O = a neolactoside nLc4Cer(d18:1(4E)) + N-acetylneuraminate. It carries out the reaction N-acetyl-alpha-neuraminosyl-(2-&gt;3)-beta-D-galactosyl-(1-&gt;4)-D-glucose + H2O = lactose + N-acetylneuraminate. Functionally, exo-alpha-sialidase that catalyzes the hydrolytic cleavage of the terminal sialic acid (N-acetylneuraminic acid, Neu5Ac) of a glycan moiety in the catabolism of glycolipids, glycoproteins and oligosacharides. Recognizes sialyl linkage positions of the glycan moiety as well as the supramolecular organization of the sialoglycoconjugate. Displays preference for alpha-(2-&gt;3)-sialylated GD1a and GT1B gangliosides over alpha-(2-&gt;8)-sialylated GD1b, in both monomeric forms and micelles. Hydrolyzes exclusively monomeric GM1 ganglioside, but has no activity toward the miscellar form. Has lower sialidase activity for glycoproteins such as fetuin and TF/transferrin that carry a mixture of alpha-(2-&gt;3) and alpha-(2-&gt;6)-sialyl linkages. Cleaves milk oligosaccharide alpha-(2-&gt;3)-sialyllactose, but is inactive toward isomer alpha-(2-&gt;6)-sialyllactose isomer. Has no activity toward colominic acid, a homomer of alpha-(2-&gt;8)-linked Neu5Ac residues. This Mus musculus (Mouse) protein is Sialidase-2 (Neu2).